The following is an 86-amino-acid chain: RQC P-site tRNA stabilizing factor (86 aa).

Residues 1 to 62 (MRLDKFLKVS…QKLVTVQVNE (62 aa)) enclose the S4 RNA-binding domain.

Belongs to the RqcP family. As to quaternary structure, associates with stalled 50S ribosomal subunits. Binds to RqcH, 23S rRNA and the P-site tRNA. Does not require RqcH for association with 50S subunits. Crystallized 50S subunits are variously associated with an A/P-site tRNA with or without RqcH, as well as with P- and E-site tRNAs but no RqcH. Displaced from the 50S subunit by puromycin but not thiostrepton.

In terms of biological role, key component of the ribosome quality control system (RQC), a ribosome-associated complex that mediates the extraction of incompletely synthesized nascent chains from stalled ribosomes and their subsequent degradation. RqcH recruits Ala-charged tRNA, and with RqcP directs the elongation of stalled nascent chains on 50S ribosomal subunits, leading to non-templated C-terminal alanine extensions (Ala tail). The Ala tail promotes nascent chain degradation. RqcP is associated with the translocation-like movement of the peptidyl-tRNA from the A-site into the P-site. RqcH, RqcP and charged tRNA(Ala) are necessary and sufficient to add an Ala tail to a model stalled nascent peptide; does not add Val. This is RQC P-site tRNA stabilizing factor from Bacillus subtilis (strain 168).